Reading from the N-terminus, the 407-residue chain is Arrestin red cell isoform 1 (407 aa).

This sequence belongs to the arrestin family.

It is found in the cytoplasm. The chain is Arrestin red cell isoform 1 from Oncorhynchus mykiss (Rainbow trout).